Consider the following 237-residue polypeptide: Ribonuclease PH (237 aa).

Phosphate-binding positions include Arg86 and 124-126 (GTR).

The protein belongs to the RNase PH family. As to quaternary structure, homohexameric ring arranged as a trimer of dimers.

The enzyme catalyses tRNA(n+1) + phosphate = tRNA(n) + a ribonucleoside 5'-diphosphate. Functionally, phosphorolytic 3'-5' exoribonuclease that plays an important role in tRNA 3'-end maturation. Removes nucleotide residues following the 3'-CCA terminus of tRNAs; can also add nucleotides to the ends of RNA molecules by using nucleoside diphosphates as substrates, but this may not be physiologically important. Probably plays a role in initiation of 16S rRNA degradation (leading to ribosome degradation) during starvation. The protein is Ribonuclease PH of Cereibacter sphaeroides (strain ATCC 17029 / ATH 2.4.9) (Rhodobacter sphaeroides).